The following is a 323-amino-acid chain: uncharacterized protein (323 aa).

Helical transmembrane passes span 8–28, 32–52, and 92–112; these read FLVI…MFME, LTLL…PFSL, and ITIF…CGIF.

The protein resides in the mitochondrion membrane. This is an uncharacterized protein from Neurospora crassa (strain ATCC 24698 / 74-OR23-1A / CBS 708.71 / DSM 1257 / FGSC 987).